A 363-amino-acid polypeptide reads, in one-letter code: Chorismate synthase (363 aa).

Arginine 47 is a binding site for NADP(+). FMN is bound by residues 124–126 (RAS), glycine 286, 301–305 (KPTAT), and arginine 327.

The protein belongs to the chorismate synthase family. In terms of assembly, homotetramer. FMNH2 is required as a cofactor.

It carries out the reaction 5-O-(1-carboxyvinyl)-3-phosphoshikimate = chorismate + phosphate. Its pathway is metabolic intermediate biosynthesis; chorismate biosynthesis; chorismate from D-erythrose 4-phosphate and phosphoenolpyruvate: step 7/7. In terms of biological role, catalyzes the anti-1,4-elimination of the C-3 phosphate and the C-6 proR hydrogen from 5-enolpyruvylshikimate-3-phosphate (EPSP) to yield chorismate, which is the branch point compound that serves as the starting substrate for the three terminal pathways of aromatic amino acid biosynthesis. This reaction introduces a second double bond into the aromatic ring system. The protein is Chorismate synthase of Prochlorococcus marinus (strain MIT 9211).